We begin with the raw amino-acid sequence, 180 residues long: uncharacterized protein (180 aa).

Residues 31 to 180 (LLVRTAEWLR…HLFEKEITAE (150 aa)) enclose the N-acetyltransferase domain.

The protein belongs to the acetyltransferase family.

This is an uncharacterized protein from Bacillus subtilis (strain 168).